The primary structure comprises 376 residues: GDSL esterase/lipase At5g55050 (376 aa).

The first 29 residues, 1-29, serve as a signal peptide directing secretion; that stretch reads MPTNNTPFLTIFLLFLGLLRFDSFPGLEA. Catalysis depends on Ser46, which acts as the Nucleophile. Residues Asn134 and Asn245 are each glycosylated (N-linked (GlcNAc...) asparagine). Residues Asp340 and His344 contribute to the active site.

This sequence belongs to the 'GDSL' lipolytic enzyme family.

Its subcellular location is the secreted. The sequence is that of GDSL esterase/lipase At5g55050 from Arabidopsis thaliana (Mouse-ear cress).